The chain runs to 308 residues: GTPase Era (308 aa).

The region spanning 14–181 (RCGFVALIGA…RSTLAEMVPP (168 aa)) is the Era-type G domain. The G1 stretch occupies residues 22-29 (GAPNVGKS). 22–29 (GAPNVGKS) provides a ligand contact to GTP. The interval 48 to 52 (QTTRA) is G2. A G3 region spans residues 69 to 72 (DTPG). GTP is bound by residues 69 to 73 (DTPGI) and 131 to 134 (NKVD). The tract at residues 131-134 (NKVD) is G4. A G5 region spans residues 160–162 (IAA). One can recognise a KH type-2 domain in the interval 212-289 (LHQELPYQST…HLFLFVKVRE (78 aa)).

Belongs to the TRAFAC class TrmE-Era-EngA-EngB-Septin-like GTPase superfamily. Era GTPase family. In terms of assembly, monomer.

The protein localises to the cytoplasm. Its subcellular location is the cell inner membrane. Its function is as follows. An essential GTPase that binds both GDP and GTP, with rapid nucleotide exchange. Plays a role in 16S rRNA processing and 30S ribosomal subunit biogenesis and possibly also in cell cycle regulation and energy metabolism. The chain is GTPase Era from Bradyrhizobium diazoefficiens (strain JCM 10833 / BCRC 13528 / IAM 13628 / NBRC 14792 / USDA 110).